Here is an 810-residue protein sequence, read N- to C-terminus: Sister chromatid cohesion 1 protein 2 (810 aa).

Disordered stretches follow at residues 200-244 (RDTT…LLEP), 273-315 (SHES…SECG), and 606-626 (MGAS…AETP). Composition is skewed to basic and acidic residues over residues 220–234 (EPSR…HRED) and 273–310 (SHES…DRSL). Over residues 606-622 (MGASSTTSGTAHQTENA) the composition is skewed to polar residues.

It belongs to the rad21 family. In terms of assembly, component of the cohesin complex. Low expression in shoots, buds, siliques, leaves and roots. Found in, but not limited to, actively dividing cells: in procambium, protoderm and ground meristem in roots, and in shoot and floral meristems.

It localises to the nucleus. Functionally, may be involved in sister chromatid cohesion during mitosis. In Arabidopsis thaliana (Mouse-ear cress), this protein is Sister chromatid cohesion 1 protein 2 (SYN2).